A 120-amino-acid chain; its full sequence is Large ribosomal subunit protein eL8 (120 aa).

It belongs to the eukaryotic ribosomal protein eL8 family. In terms of assembly, part of the 50S ribosomal subunit. Probably part of the RNase P complex.

Its subcellular location is the cytoplasm. Multifunctional RNA-binding protein that recognizes the K-turn motif in ribosomal RNA, the RNA component of RNase P, box H/ACA, box C/D and box C'/D' sRNAs. The chain is Large ribosomal subunit protein eL8 from Methanosarcina acetivorans (strain ATCC 35395 / DSM 2834 / JCM 12185 / C2A).